The primary structure comprises 90 residues: Small ribosomal subunit protein uS15 (90 aa).

Belongs to the universal ribosomal protein uS15 family. As to quaternary structure, part of the 30S ribosomal subunit. Forms a bridge to the 50S subunit in the 70S ribosome, contacting the 23S rRNA.

One of the primary rRNA binding proteins, it binds directly to 16S rRNA where it helps nucleate assembly of the platform of the 30S subunit by binding and bridging several RNA helices of the 16S rRNA. Its function is as follows. Forms an intersubunit bridge (bridge B4) with the 23S rRNA of the 50S subunit in the ribosome. The chain is Small ribosomal subunit protein uS15 from Paraburkholderia xenovorans (strain LB400).